The primary structure comprises 544 residues: Chaperonin GroEL 1 (544 aa).

ATP contacts are provided by residues 29-32 (TLGP), 86-90 (DGTTT), G413, 476-478 (NAA), and D492. Positions 523–544 (EPVKAPAGGGDMDGMGGMGGMM) are disordered. Gly residues predominate over residues 529-544 (AGGGDMDGMGGMGGMM).

The protein belongs to the chaperonin (HSP60) family. Forms a cylinder of 14 subunits composed of two heptameric rings stacked back-to-back. Interacts with the co-chaperonin GroES.

The protein localises to the cytoplasm. It carries out the reaction ATP + H2O + a folded polypeptide = ADP + phosphate + an unfolded polypeptide.. In terms of biological role, together with its co-chaperonin GroES, plays an essential role in assisting protein folding. The GroEL-GroES system forms a nano-cage that allows encapsulation of the non-native substrate proteins and provides a physical environment optimized to promote and accelerate protein folding. The sequence is that of Chaperonin GroEL 1 from Cutibacterium acnes (strain DSM 16379 / KPA171202) (Propionibacterium acnes).